The following is a 474-amino-acid chain: Glutamate--tRNA ligase (474 aa).

The 'HIGH' region motif lies at 11–21; the sequence is PSPTGFLHIGG. Positions 240–244 match the 'KMSKS' region motif; the sequence is KLSKR. Lysine 243 provides a ligand contact to ATP.

The protein belongs to the class-I aminoacyl-tRNA synthetase family. Glutamate--tRNA ligase type 1 subfamily. In terms of assembly, monomer.

The protein resides in the cytoplasm. The catalysed reaction is tRNA(Glu) + L-glutamate + ATP = L-glutamyl-tRNA(Glu) + AMP + diphosphate. Functionally, catalyzes the attachment of glutamate to tRNA(Glu) in a two-step reaction: glutamate is first activated by ATP to form Glu-AMP and then transferred to the acceptor end of tRNA(Glu). In Nitrobacter hamburgensis (strain DSM 10229 / NCIMB 13809 / X14), this protein is Glutamate--tRNA ligase.